The primary structure comprises 359 residues: Peptide chain release factor 1 (359 aa).

Glutamine 234 is modified (N5-methylglutamine).

It belongs to the prokaryotic/mitochondrial release factor family. In terms of processing, methylated by PrmC. Methylation increases the termination efficiency of RF1.

The protein resides in the cytoplasm. In terms of biological role, peptide chain release factor 1 directs the termination of translation in response to the peptide chain termination codons UAG and UAA. The protein is Peptide chain release factor 1 of Clavibacter michiganensis subsp. michiganensis (strain NCPPB 382).